The primary structure comprises 423 residues: UDP-N-acetylglucosamine 1-carboxyvinyltransferase 1 (423 aa).

24–25 (KN) lines the phosphoenolpyruvate pocket. Residue R94 participates in UDP-N-acetyl-alpha-D-glucosamine binding. Residue C118 is the Proton donor of the active site. Position 118 is a 2-(S-cysteinyl)pyruvic acid O-phosphothioketal (C118). UDP-N-acetyl-alpha-D-glucosamine contacts are provided by residues 123–127 (RPIDQ), D309, and I331.

This sequence belongs to the EPSP synthase family. MurA subfamily.

The protein resides in the cytoplasm. It carries out the reaction phosphoenolpyruvate + UDP-N-acetyl-alpha-D-glucosamine = UDP-N-acetyl-3-O-(1-carboxyvinyl)-alpha-D-glucosamine + phosphate. Its pathway is cell wall biogenesis; peptidoglycan biosynthesis. Its function is as follows. Cell wall formation. Adds enolpyruvyl to UDP-N-acetylglucosamine. The protein is UDP-N-acetylglucosamine 1-carboxyvinyltransferase 1 of Staphylococcus haemolyticus (strain JCSC1435).